The sequence spans 129 residues: Lysozyme C (129 aa).

The C-type lysozyme domain maps to 1–129 (KIYTRCELAA…VSKWIKDCKL (129 aa)). Disulfide bonds link Cys-6/Cys-127, Cys-30/Cys-115, Cys-64/Cys-80, and Cys-76/Cys-94. Residues Glu-35 and Asp-52 contribute to the active site.

Belongs to the glycosyl hydrolase 22 family. In terms of assembly, monomer.

It localises to the secreted. It carries out the reaction Hydrolysis of (1-&gt;4)-beta-linkages between N-acetylmuramic acid and N-acetyl-D-glucosamine residues in a peptidoglycan and between N-acetyl-D-glucosamine residues in chitodextrins.. Functionally, lysozymes have primarily a bacteriolytic function; those in tissues and body fluids are associated with the monocyte-macrophage system and enhance the activity of immunoagents. This Crax fasciolata (Bare-faced curassow) protein is Lysozyme C (LYZ).